The sequence spans 108 residues: uncharacterized protein (108 aa).

3 consecutive transmembrane segments (helical) span residues leucine 36–isoleucine 56, phenylalanine 58–phenylalanine 78, and isoleucine 88–leucine 108.

Its subcellular location is the cell membrane. This is an uncharacterized protein from Alkalihalophilus pseudofirmus (strain ATCC BAA-2126 / JCM 17055 / OF4) (Bacillus pseudofirmus).